We begin with the raw amino-acid sequence, 636 residues long: uncharacterized protein (636 aa).

This is an uncharacterized protein from Bacillus subtilis (strain 168).